Here is a 398-residue protein sequence, read N- to C-terminus: MKNFNLLAVSSILLVDLFRTQWGHNVHFSKAINLNGVSFNNVDASSLGAAQVRQSASRGRGLGENPKNEEGADKPKKKDEKQVEPKKPRENKLKQPAGNNAAAGEAGNNAAAGEAGNNAAAGEAGNNAAAGEAGNNAAAGEAGNNAAAGEAGNNAAGGAAGNNAAGGEAGNNAAGGAAGNNAAAGEAGNNAAGGEAGNNAAAGEAGNNAAGGAAGNNAAAGEAGNNAAAGAAGNNAAAGAAGNNAAAGEAGAGGAGRAGNNAAAGEAGAGGAGRAGNNAAAGEAGAGGAGGNAGNKKAGDAGQGQNNGGANVPNVKLVKEYLDKIRSTIGVEWSPCSVTCGKGVRMRRKVNAANKKPEELDANDLETEVCTMDKCAGIFNVVSNSLGLVILLVLALFN.

The signal sequence occupies residues 1–23 (MKNFNLLAVSSILLVDLFRTQWG). The segment at 50–110 (AQVRQSASRG…AAAGEAGNNA (61 aa)) is disordered. Basic and acidic residues predominate over residues 66–93 (PKNEEGADKPKKKDEKQVEPKKPRENKL). Positions 81–89 (KQVEPKKPR) are required for the binding to heparan sulfate proteoglycans (HSPGs) on the surface of host hepatocytes. The segment at 92–96 (KLKQP) is region I; contains the proteolytic cleavage site. 19 tandem repeats follow at residues 97–105 (AGNNAAAGE), 106–114 (AGNNAAAGE), 115–123 (AGNNAAAGE), 124–132 (AGNNAAAGE), 133–141 (AGNNAAAGE), 142–150 (AGNNAAAGE), 151–159 (AGNNAAGGA), 160–168 (AGNNAAGGE), 169–177 (AGNNAAGGA), 178–186 (AGNNAAAGE), 187–195 (AGNNAAGGE), 196–204 (AGNNAAAGE), 205–213 (AGNNAAGGA), 214–222 (AGNNAAAGE), 223–231 (AGNNAAAGA), 232–240 (AGNNAAAGA), 241–257 (AGNN…GAGR), 258–274 (AGNN…GAGR), and 275–291 (AGNN…GAGG). The span at 97 to 110 (AGNNAAAGEAGNNA) shows a compositional bias: low complexity. A 16 X 9 AA tandem repeats of A-G-N-N-A-A-[AG]-G-[EA] region spans residues 97–240 (AGNNAAAGEA…AAGNNAAAGA (144 aa)). Residues 241–291 (AGNNAAAGEAGAGGAGRAGNNAAAGEAGAGGAGRAGNNAAAGEAGAGGAGG) form a 3 X 17 AA tandem repeats of A-G-N-N-A-A-A-G-E-A-G-A-G-G-A-G-[RG] region. Positions 248-310 (GEAGAGGAGR…AGQGQNNGGA (63 aa)) are disordered. A compositionally biased stretch (gly residues) spans 284 to 293 (AGAGGAGGNA). One can recognise a TSP type-1 domain in the interval 324–376 (KIRSTIGVEWSPCSVTCGKGVRMRRKVNAANKKPEELDANDLETEVCTMDKCA). Intrachain disulfides connect Cys-336–Cys-370 and Cys-340–Cys-375. The O-linked (Fuc) threonine glycan is linked to Thr-339. Cys-375 carries GPI-anchor amidated cysteine lipidation. Positions 376 to 398 (AGIFNVVSNSLGLVILLVLALFN) are cleaved as a propeptide — removed in mature form.

This sequence belongs to the plasmodium circumsporozoite protein family. Post-translationally, during host cell invasion, proteolytically cleaved at the cell membrane in the region I by a papain-like cysteine protease of parasite origin. Cleavage is triggered by the sporozoite contact with highly sulfated heparan sulfate proteoglycans (HSPGs) present on the host hepatocyte cell surface. Cleavage exposes the TSP type-1 (TSR) domain and is required for productive invasion of host hepatocytes but not for adhesion to the host cell membrane. Cleavage is dispensable for sporozoite development in the oocyst, motility and for traversal of host and vector cells. O-glycosylated; maybe by POFUT2.

The protein resides in the cell membrane. Its subcellular location is the cytoplasm. Its function is as follows. Essential sporozoite protein. In the mosquito vector, required for sporozoite development in the oocyst, migration through the vector hemolymph and entry into the vector salivary glands. In the vertebrate host, required for sporozoite migration through the host dermis and infection of host hepatocytes. Binds to highly sulfated heparan sulfate proteoglycans (HSPGs) on the surface of host hepatocytes. In the vertebrate host, binds to highly sulfated heparan sulfate proteoglycans (HSPGs) on the surface of host hepatocytes and is required for sporozoite invasion of the host hepatocytes. The chain is Circumsporozoite protein from Plasmodium cynomolgi (strain Ceylon).